Reading from the N-terminus, the 1188-residue chain is DNA-directed RNA polymerase subunit beta (1188 aa).

It belongs to the RNA polymerase beta chain family. The RNAP catalytic core consists of 2 alpha, 1 beta, 1 beta' and 1 omega subunit. When a sigma factor is associated with the core the holoenzyme is formed, which can initiate transcription.

It carries out the reaction RNA(n) + a ribonucleoside 5'-triphosphate = RNA(n+1) + diphosphate. DNA-dependent RNA polymerase catalyzes the transcription of DNA into RNA using the four ribonucleoside triphosphates as substrates. The sequence is that of DNA-directed RNA polymerase subunit beta from Streptococcus equi subsp. equi (strain 4047).